Here is a 388-residue protein sequence, read N- to C-terminus: Staphopain A (388 aa).

The N-terminal stretch at 1-25 is a signal peptide; the sequence is MKRNFPKLIALSLIFSLSVTPIANA. A propeptide spanning residues 26–214 is cleaved from the precursor; that stretch reads ESNSNIKAKD…TSQFKSNNYT (189 aa). Active-site residues include Cys-238, His-334, and Asn-355.

Belongs to the peptidase C47 family. In the cytoplasm, prematurely activated/folded ScpA forms a stable non-covalent complex with ScpB. Post-translationally, cleavage leads to the activation of ScpA probably by an auto-catalytic manner.

Its subcellular location is the secreted. It carries out the reaction Broad endopeptidase action on proteins including elastin, but rather limited hydrolysis of small-molecule substrates. Assays are conveniently made with hemoglobin, casein or Z-Phe-Arg-NHMec as substrate.. Prematurely activated/folded staphopain A is inhibited by staphostatin A (ScpB), which is probably required to protect staphylococcal cytoplasmic proteins from degradation by ScpA. Its function is as follows. Cysteine protease that plays an important role in the inhibition of host innate immune response. Cleaves host elastins found in connective tissues, pulmonary surfactant protein A in the lungs, and the chemokine receptor CXCR2 on leukocytes. Proteolytic cleavage of surfactant protein A impairs bacterial phagocytosis by neutrophils while CXCR2 degradation blocks neutrophil activation and chemotaxis. Additionally, promotes vascular leakage by activating the plasma kallikerin/kinin system, resulting in hypotension. The sequence is that of Staphopain A (sspP) from Staphylococcus aureus (strain Mu50 / ATCC 700699).